The following is a 238-amino-acid chain: N-acetylneuraminic acid outer membrane channel protein NanC (238 aa).

An N-terminal signal peptide occupies residues 1-23 (MKKAKILSGVLLLCFSSPLISQA). At 24 to 25 (AT) the chain is on the periplasmic side. Residues 26-32 (LDVRGGY) are membrane-embedded. Topologically, residues 33–39 (RSGSHAY) are extracellular. Residues 40–49 (ETRLKVSEGW) are membrane-embedded. Residues 50 to 52 (QNG) are Periplasmic-facing. At 53–61 (WWASMESNT) the chain is embedded in the membrane. Over 62–76 (WNTIHDNKKENAALN) the chain is Extracellular. The hydrophobic stretch at 77-86 (DVQVEVNYAI) threads the membrane. Residues 87-91 (KLDDQ) lie on the Periplasmic side of the membrane. At 92-102 (WTVRPGMLTHF) the chain is embedded in the membrane. The Extracellular segment spans residues 103 to 107 (SSNGT). A transmembrane span lies at residues 108–117 (RYGPYVKLSW). Residues 118-122 (DATKD) lie on the Periplasmic side of the membrane. Over 123 to 132 (LNFGIRYRYD) the chain traverses the membrane. The Extracellular portion of the chain corresponds to 133–151 (WKAYRQQDLSGDMSRDNVH). At 152–159 (RWDGYVTY) the chain is embedded in the membrane. Topologically, residues 160–164 (HINSD) are periplasmic. Residues 165–173 (FTFAWQTTL) are membrane-embedded. Over 174–190 (YSKQNDYRYANHKKWAT) the chain is Extracellular. At 191-200 (ENAFVLQYHM) the chain is embedded in the membrane. Residues 201–203 (TPD) lie on the Periplasmic side of the membrane. A transmembrane helix spans residues 204–212 (ITPYIEYDY). The Extracellular segment spans residues 213 to 228 (LDRQGVYNGRDNLSEN). A transmembrane span lies at residues 229-236 (SYRIGVSF). At 237–238 (KL) the chain is on the periplasmic side.

Belongs to the oligogalacturonate-specific porin KdgM (TC 1.B.35) family. NanC subfamily. As to quaternary structure, monomer.

The protein resides in the cell outer membrane. It carries out the reaction N-acetylneuraminate(in) = N-acetylneuraminate(out). Outer membrane channel protein allowing the entry of N-acetylneuraminic acid (Neu5Ac, the most abundant sialic acid on host cell surfaces) into the bacteria. NanC proteins form high-conductance channels which are open at low membrane potentials and which have a weak anion selectivity. The chain is N-acetylneuraminic acid outer membrane channel protein NanC (nanC) from Escherichia coli O157:H7.